The chain runs to 379 residues: Protein-glutamate methylesterase/protein-glutamine glutaminase (379 aa).

The Response regulatory domain occupies 4-121 (KVLVVDDSSF…AKNSDEAGSL (118 aa)). Residue Asp55 is modified to 4-aspartylphosphate. Residues 185-379 (SGKEYKLLAI…ASMVKEISRG (195 aa)) enclose the CheB-type methylesterase domain. Catalysis depends on residues Ser197, His224, and Asp321.

This sequence belongs to the CheB family. In terms of processing, phosphorylated by CheA. Phosphorylation of the N-terminal regulatory domain activates the methylesterase activity.

It localises to the cytoplasm. It carries out the reaction [protein]-L-glutamate 5-O-methyl ester + H2O = L-glutamyl-[protein] + methanol + H(+). The enzyme catalyses L-glutaminyl-[protein] + H2O = L-glutamyl-[protein] + NH4(+). Involved in chemotaxis. Part of a chemotaxis signal transduction system that modulates chemotaxis in response to various stimuli. Catalyzes the demethylation of specific methylglutamate residues introduced into the chemoreceptors (methyl-accepting chemotaxis proteins or MCP) by CheR. Also mediates the irreversible deamidation of specific glutamine residues to glutamic acid. This Colwellia psychrerythraea (strain 34H / ATCC BAA-681) (Vibrio psychroerythus) protein is Protein-glutamate methylesterase/protein-glutamine glutaminase.